The following is a 274-amino-acid chain: 2,3,4,5-tetrahydropyridine-2,6-dicarboxylate N-succinyltransferase (274 aa).

2 residues coordinate substrate: R104 and D141.

Belongs to the transferase hexapeptide repeat family. As to quaternary structure, homotrimer.

Its subcellular location is the cytoplasm. It catalyses the reaction (S)-2,3,4,5-tetrahydrodipicolinate + succinyl-CoA + H2O = (S)-2-succinylamino-6-oxoheptanedioate + CoA. Its pathway is amino-acid biosynthesis; L-lysine biosynthesis via DAP pathway; LL-2,6-diaminopimelate from (S)-tetrahydrodipicolinate (succinylase route): step 1/3. In Escherichia coli O157:H7, this protein is 2,3,4,5-tetrahydropyridine-2,6-dicarboxylate N-succinyltransferase (dapD).